A 93-amino-acid polypeptide reads, in one-letter code: Acylphosphatase (93 aa).

Cysteines 5 and 49 form a disulfide. Positions 5 to 93 (CIIAWVYGRV…ETLTGFSIRY (89 aa)) constitute an Acylphosphatase-like domain. Asparagine 38 is an active-site residue.

It belongs to the acylphosphatase family.

The enzyme catalyses an acyl phosphate + H2O = a carboxylate + phosphate + H(+). This chain is Acylphosphatase, found in Salmonella paratyphi A (strain ATCC 9150 / SARB42).